We begin with the raw amino-acid sequence, 265 residues long: Glutamate racemase (265 aa).

Residues 12 to 13 (DS) and 44 to 45 (YG) contribute to the substrate site. Residue C75 is the Proton donor/acceptor of the active site. 76–77 (NT) lines the substrate pocket. The active-site Proton donor/acceptor is the C186. 187–188 (TH) is a binding site for substrate.

This sequence belongs to the aspartate/glutamate racemases family.

The catalysed reaction is L-glutamate = D-glutamate. The protein operates within cell wall biogenesis; peptidoglycan biosynthesis. Functionally, provides the (R)-glutamate required for cell wall biosynthesis. In Pseudomonas aeruginosa (strain ATCC 15692 / DSM 22644 / CIP 104116 / JCM 14847 / LMG 12228 / 1C / PRS 101 / PAO1), this protein is Glutamate racemase.